A 262-amino-acid polypeptide reads, in one-letter code: Protein N-terminal and lysine N-methyltransferase EFM7 (262 aa).

Residues W59, 86–88 (GAA), D108, W143, and S171 each bind S-adenosyl-L-methionine.

This sequence belongs to the class I-like SAM-binding methyltransferase superfamily. EFM7 family.

Its subcellular location is the cytoplasm. In terms of biological role, S-adenosyl-L-methionine-dependent protein methyltransferase that trimethylates the N-terminal glycine 'Gly-2' of elongation factor 1-alpha, before also catalyzing the mono- and dimethylation of 'Lys-3'. The chain is Protein N-terminal and lysine N-methyltransferase EFM7 from Candida albicans (strain SC5314 / ATCC MYA-2876) (Yeast).